A 299-amino-acid polypeptide reads, in one-letter code: Protease HtpX homolog (299 aa).

Transmembrane regions (helical) follow at residues 14-34 (WLLL…VGYL) and 39-59 (GFGG…TMIF). Histidine 143 is a binding site for Zn(2+). The active site involves glutamate 144. A Zn(2+)-binding site is contributed by histidine 147. Helical transmembrane passes span 153 to 173 (IRIS…AVMA) and 198 to 218 (IILL…ATLV). Residue glutamate 227 participates in Zn(2+) binding.

This sequence belongs to the peptidase M48B family. Zn(2+) is required as a cofactor.

It localises to the cell membrane. The protein is Protease HtpX homolog of Streptococcus thermophilus (strain ATCC BAA-491 / LMD-9).